Consider the following 381-residue polypeptide: MASASLISEPSFSAYWGGSGGFANQTVVDKVPPEMLYLVDPHWYQFPPMNPLWHGLLGFVIGVLGVISVIGNGMVIYIFSTTKSLRTPSNLLVVNLAFSDFLMMFTMSAPMGINCYYETWVLGPFMCELYALFGSLFGCGSIWTMTMIALDRYNVIVKGLSAKPMTNKTAMLRILFIWAFSVAWTIMPLFGWNRYVPEGNMTACGTDYLTKDWVSRSYILVYSFFVYLLPLGTIIYSYFFILQAVSAHEKQMREQRKKMNVASLRSAEASQTSAECKLAKVALMTISLWFFGWTPYLIINFTGIFETMKISPLLTIWGSLFAKANAVFNPIVYGISHPKYRAALEKKFPSLACASSSDDNTSVASGATTVSDEKSEKSASA.

Topologically, residues methionine 1–tryptophan 53 are extracellular. Asparagine 24 carries an N-linked (GlcNAc...) asparagine glycan. A helical transmembrane segment spans residues histidine 54–isoleucine 78. The Cytoplasmic segment spans residues phenylalanine 79–asparagine 90. The helical transmembrane segment at leucine 91–cysteine 115 threads the bilayer. Residues tyrosine 116–tyrosine 130 are Extracellular-facing. Residues cysteine 127 and cysteine 204 are joined by a disulfide bond. The helical transmembrane segment at alanine 131–leucine 150 threads the bilayer. At aspartate 151–threonine 169 the chain is on the cytoplasmic side. The helical transmembrane segment at alanine 170 to asparagine 193 threads the bilayer. Residues arginine 194–serine 217 lie on the Extracellular side of the membrane. A glycan (N-linked (GlcNAc...) asparagine) is linked at asparagine 200. The chain crosses the membrane as a helical span at residues tyrosine 218–valine 245. At serine 246–lysine 280 the chain is on the cytoplasmic side. The helical transmembrane segment at valine 281–isoleucine 304 threads the bilayer. Over phenylalanine 305–serine 311 the chain is Extracellular. The chain crosses the membrane as a helical span at residues proline 312–serine 336. Lysine 323 carries the N6-(retinylidene)lysine modification. The Cytoplasmic portion of the chain corresponds to histidine 337–alanine 381. Over residues alanine 354–valine 370 the composition is skewed to polar residues. A disordered region spans residues alanine 354–alanine 381. The span at serine 371 to alanine 381 shows a compositional bias: basic and acidic residues.

The protein belongs to the G-protein coupled receptor 1 family. Opsin subfamily. In terms of processing, phosphorylated on some or all of the serine and threonine residues present in the C-terminal region.

Its subcellular location is the cell projection. The protein localises to the rhabdomere membrane. Its function is as follows. Visual pigments are the light-absorbing molecules that mediate vision. They consist of an apoprotein, opsin, covalently linked to cis-retinal. The sequence is that of Opsin-1 (Lo1) from Schistocerca gregaria (Desert locust).